Reading from the N-terminus, the 275-residue chain is Autophagy protein 5 (275 aa).

At M1 the chain carries N-acetylmethionine. K130 is covalently cross-linked (Glycyl lysine isopeptide (Lys-Gly) (interchain with G-Cter in ATG12)).

The protein belongs to the ATG5 family. As to quaternary structure, forms a conjugate with ATG12. Part of the minor complex composed of 4 sets of ATG12-ATG5 and ATG16L1 (400 kDa); this complex interacts with ATG3 leading to disruption of ATG7 interaction and promotion of ATG8-like proteins lipidation. Forms an 800-kDa complex composed of ATG12-ATG5 and ATG16L2. The ATG12-ATG5 conjugate interacts with RAB33A; this interaction is bridged by ATG16L1 and promotes ATG12-ATG5-ATG16L1 complex recruitment to phagophores. Interacts with TECPR1; the interaction is direct and does not take place when ATG16L1 is associated with the ATG5-ATG12 conjugate. Interacts with DHX58/RIG-1, IFIH1/MDA5 and MAVS/IPS-1 in monomeric form as well as in ATG12-ATG5 conjugate form. The interaction with MAVS is further enhanced upon vesicular stomatitis virus (VSV) infection. Interacts with ATG3. Interacts with ATG7 and ATG10. Interacts with FADD. Interacts with Bassoon/BSN; this interaction is important for the regulation of presynaptic autophagy. Interacts with ATG16L2. In terms of processing, conjugated to ATG12; which is essential for autophagy, but is not required for association with isolation membrane. Acetylated by EP300.

The protein localises to the cytoplasm. It is found in the preautophagosomal structure membrane. Involved in autophagic vesicle formation. Conjugation with ATG12, through a ubiquitin-like conjugating system involving ATG7 as an E1-like activating enzyme and ATG10 as an E2-like conjugating enzyme, is essential for its function. The ATG12-ATG5 conjugate acts as an E3-like enzyme which is required for lipidation of ATG8 family proteins and their association to the vesicle membranes. Involved in mitochondrial quality control after oxidative damage, and in subsequent cellular longevity. Plays a critical role in multiple aspects of lymphocyte development and is essential for both B and T lymphocyte survival and proliferation. Required for optimal processing and presentation of antigens for MHC II. Involved in the maintenance of axon morphology and membrane structures, as well as in normal adipocyte differentiation. Promotes primary ciliogenesis through removal of OFD1 from centriolar satellites and degradation of IFT20 via the autophagic pathway. As part of the ATG8 conjugation system with ATG12 and ATG16L1, required for recruitment of LRRK2 to stressed lysosomes and induction of LRRK2 kinase activity in response to lysosomal stress. Its function is as follows. May play an important role in the apoptotic process, possibly within the modified cytoskeleton. Its expression is a relatively late event in the apoptotic process, occurring downstream of caspase activity. Plays a crucial role in IFN-gamma-induced autophagic cell death by interacting with FADD. The chain is Autophagy protein 5 from Bos taurus (Bovine).